The primary structure comprises 352 residues: tRNA N6-adenosine threonylcarbamoyltransferase (352 aa).

A divalent metal cation contacts are provided by His114, His118, and Tyr135. Residues 135–139 (YVSGG), Asp167, Gly182, Glu186, and Asn283 contribute to the substrate site. Asp311 contacts a divalent metal cation.

The protein belongs to the KAE1 / TsaD family. As to quaternary structure, component of the EKC/KEOPS complex composed of at least BUD32, CGI121, GON7, KAE1 and PCC1; the whole complex dimerizes. A divalent metal cation is required as a cofactor.

It localises to the cytoplasm. The protein localises to the nucleus. It catalyses the reaction L-threonylcarbamoyladenylate + adenosine(37) in tRNA = N(6)-L-threonylcarbamoyladenosine(37) in tRNA + AMP + H(+). In terms of biological role, component of the EKC/KEOPS complex that is required for the formation of a threonylcarbamoyl group on adenosine at position 37 (t(6)A37) in tRNAs that read codons beginning with adenine. The complex is probably involved in the transfer of the threonylcarbamoyl moiety of threonylcarbamoyl-AMP (TC-AMP) to the N6 group of A37. KAE1 likely plays a direct catalytic role in this reaction, but requires other protein(s) of the complex to fulfill this activity. The EKC/KEOPS complex also promotes both telomere uncapping and telomere elongation. The complex is required for efficient recruitment of transcriptional coactivators. The chain is tRNA N6-adenosine threonylcarbamoyltransferase from Phaeosphaeria nodorum (strain SN15 / ATCC MYA-4574 / FGSC 10173) (Glume blotch fungus).